The sequence spans 172 residues: Small ribosomal subunit protein uS5 (172 aa).

The S5 DRBM domain occupies 17 to 80 (LREKMIAINR…EEARRNLAKI (64 aa)).

It belongs to the universal ribosomal protein uS5 family. Part of the 30S ribosomal subunit. Contacts proteins S4 and S8.

With S4 and S12 plays an important role in translational accuracy. Its function is as follows. Located at the back of the 30S subunit body where it stabilizes the conformation of the head with respect to the body. The sequence is that of Small ribosomal subunit protein uS5 from Variovorax paradoxus (strain S110).